The sequence spans 300 residues: MMDQSIADAFPEVQVLEHEPLSKYTNTQTGGPADLLVFPESVTETKRLVLWAKETDTPLTIIGNASNLIVRDGGIRGLTLILTKMDDIQVNGNEVVAEAGAALIQTTEVAYQAGLTGLEFAAGIPGSIGGAVFMNAGAYDGEISEVVTSAEILTRDGEIKNLNNHELDFGYRHSSVQDYQDVVLSATFKLRSGDANKIRARMDELNRLRASKQPLEYPSCGSVFKRPTGYFTGKLIHEAGLQGFTVGGAQVSMKHAGFIINVGGATATDYMDVIHHVQATVLKQFGVTLETEVRIIGEEK.

The FAD-binding PCMH-type domain occupies 29 to 193; that stretch reads TGGPADLLVF…LSATFKLRSG (165 aa). Arginine 172 is an active-site residue. Serine 222 (proton donor) is an active-site residue. The active site involves glutamate 292.

Belongs to the MurB family. FAD is required as a cofactor.

It localises to the cytoplasm. It catalyses the reaction UDP-N-acetyl-alpha-D-muramate + NADP(+) = UDP-N-acetyl-3-O-(1-carboxyvinyl)-alpha-D-glucosamine + NADPH + H(+). It participates in cell wall biogenesis; peptidoglycan biosynthesis. In terms of biological role, cell wall formation. The protein is UDP-N-acetylenolpyruvoylglucosamine reductase of Pediococcus pentosaceus (strain ATCC 25745 / CCUG 21536 / LMG 10740 / 183-1w).